A 393-amino-acid polypeptide reads, in one-letter code: Prokineticin receptor 1 (393 aa).

Residues 1–62 lie on the Extracellular side of the membrane; sequence METTMGFMDD…TNSRTFFAAK (62 aa). Residues Asn11, Asn14, and Asn36 are each glycosylated (N-linked (GlcNAc...) asparagine). The helical transmembrane segment at 63–83 threads the bilayer; the sequence is IVIGMALVGIMLVCGIGNFIF. At 84–98 the chain is on the cytoplasmic side; sequence IAALVRYKKLRNLTN. Residues 99 to 119 form a helical membrane-spanning segment; the sequence is LLIANLAISDFLVAIVCCPFE. Residues 120–146 are Extracellular-facing; the sequence is MDYYVVRQLSWEHGHVLCTSVNYLRTV. Cys137 and Cys217 are disulfide-bonded. A helical membrane pass occupies residues 147–167; it reads SLYVSTNALLAIAIDRYLAIV. At 168–180 the chain is on the cytoplasmic side; it reads HPLRPRMKCQTAT. The helical transmembrane segment at 181–201 threads the bilayer; sequence GLIALVWTVSILIAIPSAYFT. Residues 202–232 lie on the Extracellular side of the membrane; sequence TETVLVIVKSQEKIFCGQIWPVDQQLYYKSY. Residues 233 to 253 traverse the membrane as a helical segment; the sequence is FLFIFGIEFVGPVVTMTLCYA. Over 254–282 the chain is Cytoplasmic; the sequence is RISRELWFKAVPGFQTEQIRKRLRCRRKT. Residues 283 to 303 traverse the membrane as a helical segment; sequence VLVLMCILTAYVLCWAPFYGF. Residues 304–322 lie on the Extracellular side of the membrane; it reads TIVRDFFPTVFVKEKHYLT. The helical transmembrane segment at 323-343 threads the bilayer; sequence AFYIVECIAMSNSMINTLCFV. Topologically, residues 344–393 are cytoplasmic; it reads TVKNDTVKYFKKIMLLHWKASYNGGKSSADLDLKTIGMPATEEVDCIRLK.

Belongs to the G-protein coupled receptor 1 family. Localizes to glandular epithelium, stroma and vascular endothelial cells of first trimester decidua (at protein level). Up-regulated in first trimester decidua when compared with non-pregnant endometrium. Expressed in the stomach, throughout the small intestine, colon, rectum, thyroid gland, pituitary gland, salivary gland, adrenal gland, testis, ovary, brain, spleen, prostate and pancreas.

It localises to the cell membrane. Receptor for prokineticin 1. Exclusively coupled to the G(q) subclass of heteromeric G proteins. Activation leads to mobilization of calcium, stimulation of phosphoinositide turnover and activation of p44/p42 mitogen-activated protein kinase. May play a role during early pregnancy. This chain is Prokineticin receptor 1 (PROKR1), found in Homo sapiens (Human).